The sequence spans 78 residues: Putative membrane protein insertion efficiency factor (78 aa).

The protein belongs to the UPF0161 family.

The protein localises to the cell membrane. Functionally, could be involved in insertion of integral membrane proteins into the membrane. This Bacillus thuringiensis subsp. konkukian (strain 97-27) protein is Putative membrane protein insertion efficiency factor.